Here is a 125-residue protein sequence, read N- to C-terminus: Prefoldin subunit beta (125 aa).

It belongs to the prefoldin subunit beta family. Heterohexamer of two alpha and four beta subunits.

It localises to the cytoplasm. Functionally, molecular chaperone capable of stabilizing a range of proteins. Seems to fulfill an ATP-independent, HSP70-like function in archaeal de novo protein folding. This is Prefoldin subunit beta from Pyrobaculum islandicum (strain DSM 4184 / JCM 9189 / GEO3).